Reading from the N-terminus, the 311-residue chain is Lipoyl synthase (311 aa).

The [4Fe-4S] cluster site is built by cysteine 58, cysteine 63, cysteine 69, cysteine 84, cysteine 88, cysteine 91, and serine 298. Residues 70–287 (FGHGTATFMI…EQEALAMGFR (218 aa)) enclose the Radical SAM core domain.

The protein belongs to the radical SAM superfamily. Lipoyl synthase family. It depends on [4Fe-4S] cluster as a cofactor.

It is found in the cytoplasm. The enzyme catalyses [[Fe-S] cluster scaffold protein carrying a second [4Fe-4S](2+) cluster] + N(6)-octanoyl-L-lysyl-[protein] + 2 oxidized [2Fe-2S]-[ferredoxin] + 2 S-adenosyl-L-methionine + 4 H(+) = [[Fe-S] cluster scaffold protein] + N(6)-[(R)-dihydrolipoyl]-L-lysyl-[protein] + 4 Fe(3+) + 2 hydrogen sulfide + 2 5'-deoxyadenosine + 2 L-methionine + 2 reduced [2Fe-2S]-[ferredoxin]. It participates in protein modification; protein lipoylation via endogenous pathway; protein N(6)-(lipoyl)lysine from octanoyl-[acyl-carrier-protein]: step 2/2. Catalyzes the radical-mediated insertion of two sulfur atoms into the C-6 and C-8 positions of the octanoyl moiety bound to the lipoyl domains of lipoate-dependent enzymes, thereby converting the octanoylated domains into lipoylated derivatives. This Thiobacillus denitrificans (strain ATCC 25259 / T1) protein is Lipoyl synthase.